Consider the following 344-residue polypeptide: MLTLGLESSCDETACALVDANAKIVANVVFSQQDHVSYGGIVPELASRAHLQVFPSVVQSALKESGVSLEDIDLFAVTHTPGLIGALAIGVNFAKGLAVGCQKPIIGVNHVEAHLYAAYMEASSVEFPALGLVVSGAHTAIFLMEDPLTYKLIGKSRDDAIGETFDKVARFLGLPYPGGALIEKLAVHGCESSYPFSPSKVPGYDLSFSGLKTAVLYAIKGNNSNHRTPLPELSESQKNNISASFQKAAFTSVAQKLPNIVKKFSCRSLLVGGGVANNKYFQSLLKNTLDLPLYFPSSKLCTDNAAMIAGLGRELFLSEKITSGITPCARYQWESASVSLSPLP.

Fe cation-binding residues include His110 and His114. Substrate contacts are provided by residues 133-137 (VVSGA), Asp166, Gly179, and Asn278. Asp303 is a Fe cation binding site.

The protein belongs to the KAE1 / TsaD family. It depends on Fe(2+) as a cofactor.

It localises to the cytoplasm. The catalysed reaction is L-threonylcarbamoyladenylate + adenosine(37) in tRNA = N(6)-L-threonylcarbamoyladenosine(37) in tRNA + AMP + H(+). Functionally, required for the formation of a threonylcarbamoyl group on adenosine at position 37 (t(6)A37) in tRNAs that read codons beginning with adenine. Is involved in the transfer of the threonylcarbamoyl moiety of threonylcarbamoyl-AMP (TC-AMP) to the N6 group of A37, together with TsaE and TsaB. TsaD likely plays a direct catalytic role in this reaction. The sequence is that of tRNA N6-adenosine threonylcarbamoyltransferase from Chlamydia abortus (strain DSM 27085 / S26/3) (Chlamydophila abortus).